Consider the following 137-residue polypeptide: NADH-quinone oxidoreductase subunit A (137 aa).

3 helical membrane-spanning segments follow: residues 12–32 (WGFA…LGVS), 66–86 (FYLV…LFAW), and 96–116 (TGFV…VYLF).

The protein belongs to the complex I subunit 3 family. NDH-1 is composed of 13 different subunits. Subunits NuoA, H, J, K, L, M, N constitute the membrane sector of the complex.

The protein localises to the cell inner membrane. It catalyses the reaction a quinone + NADH + 5 H(+)(in) = a quinol + NAD(+) + 4 H(+)(out). Its function is as follows. NDH-1 shuttles electrons from NADH, via FMN and iron-sulfur (Fe-S) centers, to quinones in the respiratory chain. The immediate electron acceptor for the enzyme in this species is believed to be ubiquinone. Couples the redox reaction to proton translocation (for every two electrons transferred, four hydrogen ions are translocated across the cytoplasmic membrane), and thus conserves the redox energy in a proton gradient. This chain is NADH-quinone oxidoreductase subunit A, found in Pseudomonas fluorescens (strain Pf0-1).